The primary structure comprises 189 residues: Large ribosomal subunit protein eL14 (189 aa).

Belongs to the eukaryotic ribosomal protein eL14 family.

Functionally, component of the large ribosomal subunit. The ribosome is a large ribonucleoprotein complex responsible for the synthesis of proteins in the cell. The protein is Large ribosomal subunit protein eL14 of Trypanosoma brucei brucei.